A 312-amino-acid polypeptide reads, in one-letter code: Glyoxylate/hydroxypyruvate reductase A (312 aa).

R227 is a catalytic residue. Catalysis depends on H275, which acts as the Proton donor.

Belongs to the D-isomer specific 2-hydroxyacid dehydrogenase family. GhrA subfamily.

It localises to the cytoplasm. It catalyses the reaction glycolate + NADP(+) = glyoxylate + NADPH + H(+). The enzyme catalyses (R)-glycerate + NAD(+) = 3-hydroxypyruvate + NADH + H(+). It carries out the reaction (R)-glycerate + NADP(+) = 3-hydroxypyruvate + NADPH + H(+). Functionally, catalyzes the NADPH-dependent reduction of glyoxylate and hydroxypyruvate into glycolate and glycerate, respectively. The protein is Glyoxylate/hydroxypyruvate reductase A of Enterobacter sp. (strain 638).